A 157-amino-acid chain; its full sequence is Molybdopterin synthase catalytic subunit (157 aa).

Residues histidine 103–arginine 104, lysine 119, and lysine 126–glutamate 128 contribute to the substrate site.

The protein belongs to the MoaE family. MOCS2B subfamily. Heterotetramer; composed of 2 small (MOCS2A) and 2 large (MOCS2B) subunits.

It localises to the cytoplasm. It carries out the reaction 2 [molybdopterin-synthase sulfur-carrier protein]-C-terminal-Gly-aminoethanethioate + cyclic pyranopterin phosphate + H2O = molybdopterin + 2 [molybdopterin-synthase sulfur-carrier protein]-C-terminal Gly-Gly + 2 H(+). It functions in the pathway cofactor biosynthesis; molybdopterin biosynthesis. Catalytic subunit of the molybdopterin synthase complex, a complex that catalyzes the conversion of precursor Z into molybdopterin. Acts by mediating the incorporation of 2 sulfur atoms from thiocarboxylated MOCS2A into precursor Z to generate a dithiolene group. The chain is Molybdopterin synthase catalytic subunit from Culex quinquefasciatus (Southern house mosquito).